A 127-amino-acid polypeptide reads, in one-letter code: Protein HI_1253 (127 aa).

4 consecutive transmembrane segments (helical) span residues 13 to 33 (VIMLVHLHIFFAFLSLALLVI), 61 to 81 (LIVSGVVILYLFAFGIEWWLV), 82 to 102 (AKFALLILYIVFAAKFFSKKV), and 107 to 127 (SIFFWLACVSFIGAMLIAYLK).

This sequence belongs to the SirB2 family.

Its subcellular location is the cell inner membrane. The sequence is that of Protein HI_1253 from Haemophilus influenzae (strain ATCC 51907 / DSM 11121 / KW20 / Rd).